Here is a 648-residue protein sequence, read N- to C-terminus: Probable LRR receptor-like serine/threonine-protein kinase At4g30520 (648 aa).

Residues 1 to 30 (MVVVTKKTMKIQIHLLYSFLFLCFSTLTLS) form the signal peptide. The Extracellular portion of the chain corresponds to 31–238 (SEPRNPEVEA…SSSGRRSNRL (208 aa)). Asn-99 and Asn-112 each carry an N-linked (GlcNAc...) asparagine glycan. LRR repeat units lie at residues 100-125 (LTNL…GFLP), 127-148 (LQTL…IDQL), 149-172 (SSLQ…LSQI), and 174-199 (HLSF…TFNV). Residues Asn-158 and Asn-184 are each glycosylated (N-linked (GlcNAc...) asparagine). The chain crosses the membrane as a helical span at residues 239–259 (AIALSVSLGSVVILVLALGSF). Residues 260–648 (CWYRKKQRRL…SFAMELSGPR (389 aa)) are Cytoplasmic-facing. At Thr-300 the chain carries Phosphothreonine. One can recognise a Protein kinase domain in the interval 303–582 (FSSKNILGAG…EGDGLAERWA (280 aa)). An ATP-binding site is contributed by 309–317 (LGAGGFGNV). At Thr-326 the chain carries Phosphothreonine. Lys-331 lines the ATP pocket. A phosphoserine mark is found at Ser-384 and Ser-387. The active-site Proton acceptor is the Asp-426. Residues Thr-459, Thr-460, and Thr-465 each carry the phosphothreonine modification. Position 473 is a phosphotyrosine (Tyr-473). Ser-475 bears the Phosphoserine mark. At Thr-476 the chain carries Phosphothreonine. Ser-480 is subject to Phosphoserine. Phosphothreonine is present on Thr-555.

The protein belongs to the protein kinase superfamily. Ser/Thr protein kinase family.

It is found in the cell membrane. The catalysed reaction is L-seryl-[protein] + ATP = O-phospho-L-seryl-[protein] + ADP + H(+). The enzyme catalyses L-threonyl-[protein] + ATP = O-phospho-L-threonyl-[protein] + ADP + H(+). This Arabidopsis thaliana (Mouse-ear cress) protein is Probable LRR receptor-like serine/threonine-protein kinase At4g30520.